Consider the following 607-residue polypeptide: Bifunctional endo-1,4-beta-xylanase A (607 aa).

Positions 1-18 (MRTIKFFFAVAIATVAKA) are cleaved as a signal peptide. In terms of domain architecture, GH11 1 spans 35-242 (NGQTQHKGVA…SSGIADVTKL (208 aa)). E141 serves as the catalytic Nucleophile. The active-site Proton donor is the E223. Residues 248–272 (QKGSNPAPTSTGTVPSSSAGGSTAN) are compositionally biased toward polar residues. Positions 248–284 (QKGSNPAPTSTGTVPSSSAGGSTANGKKFTVGNGQNQ) are disordered. Positions 280–487 (NGQNQHKGVN…SSGVADVTLL (208 aa)) constitute a GH11 2 domain. The Nucleophile role is filled by E386. E474 serves as the catalytic Proton donor. The disordered stretch occupies residues 493–514 (PKGSSPATSAAPRTTTRTTTRT). Positions 496–514 (SSPATSAAPRTTTRTTTRT) are enriched in low complexity. CBM10 domains follow at residues 523–563 (KCSA…CGCG) and 566–606 (QCSS…CGCG).

The protein belongs to the glycosyl hydrolase 11 (cellulase G) family.

It catalyses the reaction Endohydrolysis of (1-&gt;4)-beta-D-xylosidic linkages in xylans.. The protein operates within glycan degradation; xylan degradation. Hydrolyzes xylans into xylobiose and xylose. The protein is Bifunctional endo-1,4-beta-xylanase A (XYNA) of Neocallimastix patriciarum (Rumen fungus).